The following is a 417-amino-acid chain: D-inositol 3-phosphate glycosyltransferase (417 aa).

H15 lines the 1D-myo-inositol 3-phosphate pocket. UDP-N-acetyl-alpha-D-glucosamine-binding positions include 21 to 22 (QP) and G29. 1D-myo-inositol 3-phosphate is bound by residues 26-31 (DAGGMN), K84, Y117, T141, and R161. Residues R241, K246, and V299 each coordinate UDP-N-acetyl-alpha-D-glucosamine. The Mg(2+) site is built by Y308, R309, and A311. UDP-N-acetyl-alpha-D-glucosamine is bound by residues E321 and E329. Position 335 (T335) interacts with Mg(2+).

This sequence belongs to the glycosyltransferase group 1 family. MshA subfamily. Homodimer.

It catalyses the reaction 1D-myo-inositol 3-phosphate + UDP-N-acetyl-alpha-D-glucosamine = 1D-myo-inositol 2-acetamido-2-deoxy-alpha-D-glucopyranoside 3-phosphate + UDP + H(+). In terms of biological role, catalyzes the transfer of a N-acetyl-glucosamine moiety to 1D-myo-inositol 3-phosphate to produce 1D-myo-inositol 2-acetamido-2-deoxy-glucopyranoside 3-phosphate in the mycothiol biosynthesis pathway. The sequence is that of D-inositol 3-phosphate glycosyltransferase from Xylanimonas cellulosilytica (strain DSM 15894 / JCM 12276 / CECT 5975 / KCTC 9989 / LMG 20990 / NBRC 107835 / XIL07).